Reading from the N-terminus, the 345-residue chain is sn-glycerol-3-phosphate import ATP-binding protein UgpC (345 aa).

The 232-residue stretch at 4–235 folds into the ABC transporter domain; the sequence is IQLLNIKKQY…PKTIFVADFI (232 aa). Residue 37-44 coordinates ATP; sequence GPSGCGKS.

This sequence belongs to the ABC transporter superfamily. sn-glycerol-3-phosphate importer (TC 3.A.1.1.3) family. As to quaternary structure, the complex is composed of two ATP-binding proteins (UgpC), two transmembrane proteins (UgpA and UgpE) and a solute-binding protein (UgpB).

The protein localises to the cell inner membrane. The catalysed reaction is sn-glycerol 3-phosphate(out) + ATP + H2O = sn-glycerol 3-phosphate(in) + ADP + phosphate + H(+). Its function is as follows. Part of the ABC transporter complex UgpBAEC involved in sn-glycerol-3-phosphate (G3P) import. Responsible for energy coupling to the transport system. The sequence is that of sn-glycerol-3-phosphate import ATP-binding protein UgpC from Bartonella bacilliformis (strain ATCC 35685 / KC583 / Herrer 020/F12,63).